The following is a 214-amino-acid chain: Ras-related protein RABA2b (214 aa).

19 to 26 (GDSGVGKS) is a GTP binding site. The short motif at 41–49 (SKSTIGVEF) is the Effector region element. Residues 67 to 71 (DTAGQ), 125 to 128 (NKSD), and 155 to 156 (SA) contribute to the GTP site. 2 S-geranylgeranyl cysteine lipidation sites follow: Cys-211 and Cys-212.

Belongs to the small GTPase superfamily. Rab family. Expressed in root tips.

It is found in the endosome membrane. The protein resides in the golgi apparatus. The protein localises to the trans-Golgi network membrane. Intracellular vesicle trafficking and protein transport. The polypeptide is Ras-related protein RABA2b (RABA2B) (Arabidopsis thaliana (Mouse-ear cress)).